Consider the following 383-residue polypeptide: Ovalbumin (383 aa).

An N-acetylglycine modification is found at Gly-2. Positions 22 to 48 form a signal peptide, not cleaved; sequence HHANDNMLYSPFAILSTLAMVFLGAKD. Ser-69 is modified (phosphoserine). Residues Cys-74 and Cys-121 are joined by a disulfide bond. Residues Asn-293 and Asn-312 are each glycosylated (N-linked (GlcNAc...) asparagine). Ser-345 carries the post-translational modification Phosphoserine.

This sequence belongs to the serpin family. Ov-serpin subfamily. Post-translationally, the signal sequence is not cleaved. The functional signal for membrane translocation of ovalbumin becomes accessible when the nascent chain is 50 to 60 residues long. The hydrophobic sequence which lies between residues 27 and 43 folds back on the preceding residues to form an amphipathic hairpin structure which is the signal element recognized by the membrane. Major protein of egg white.

The protein resides in the secreted. Storage protein of egg white. Lack protease inhibitory activity. This Coturnix coturnix (Common quail) protein is Ovalbumin (SERPINB14).